Here is a 320-residue protein sequence, read N- to C-terminus: MYHNSSQKRHWTFASEEQLARLRADANRKFKCKAVANGKVLPNDPVFLEPHEEITLCKYYEKRLLEFCSVFKPAMPRSVVGTACMYFKRFYLNNSVMEYHPRIIMLTCAFLACKVDEFNVSSPQFVGNLRESPLGQEKTLEQILEYELLLIQQLNFHLIVHNPYRPFEGFLIDLKTRYPLLENPEILRKTADDFLNRVALTDAHLLYTPSQIALTAILSSASRAGITMESYLSESLMLKENRTSLSQLLDIMKSMRNLVKKYEPPRPEEVAALKQKLERCHSAELALNVVTKKRKGYEDDDYVSKKSKHEEVCSPKGSFM.

Serine 5 is subject to Phosphoserine; by CDK8. Position 132 is a phosphoserine (serine 132). A Phosphoserine; by CDK8 modification is found at serine 304.

The protein belongs to the cyclin family. Cyclin C subfamily. As to quaternary structure, associates primarily with CDK7 and MAT1 to form the CAK complex. CAK can further associate with the core-TFIIH to form the TFIIH basal transcription factor.

It localises to the nucleus. In terms of biological role, regulates CDK7, the catalytic subunit of the CDK-activating kinase (CAK) enzymatic complex. CAK activates the cyclin-associated kinases CDK1, CDK2, CDK4 and CDK6 by threonine phosphorylation. CAK complexed to the core-TFIIH basal transcription factor activates RNA polymerase II by serine phosphorylation of the repetitive C-terminal domain (CTD) of its large subunit (POLR2A), allowing its escape from the promoter and elongation of the transcripts. Involved in cell cycle control and in RNA transcription by RNA polymerase II. Its expression and activity are constant throughout the cell cycle. The protein is Cyclin-H (CCNH) of Bos taurus (Bovine).